Reading from the N-terminus, the 464-residue chain is 3-isopropylmalate dehydratase large subunit (464 aa).

Cys-337, Cys-397, and Cys-400 together coordinate [4Fe-4S] cluster.

Belongs to the aconitase/IPM isomerase family. LeuC type 1 subfamily. As to quaternary structure, heterodimer of LeuC and LeuD. [4Fe-4S] cluster is required as a cofactor.

It catalyses the reaction (2R,3S)-3-isopropylmalate = (2S)-2-isopropylmalate. It participates in amino-acid biosynthesis; L-leucine biosynthesis; L-leucine from 3-methyl-2-oxobutanoate: step 2/4. In terms of biological role, catalyzes the isomerization between 2-isopropylmalate and 3-isopropylmalate, via the formation of 2-isopropylmaleate. This chain is 3-isopropylmalate dehydratase large subunit, found in Bacillus cereus (strain 03BB102).